The chain runs to 406 residues: Tyrosine--tRNA ligase (406 aa).

The 'HIGH' region signature appears at 48 to 57 (PSRPDLHLGH). A 'KMSKS' region motif is present at residues 232–236 (KMSKS). Lys-235 is a binding site for ATP. The S4 RNA-binding domain maps to 339–401 (MPVVELLMAL…GKRKFFKVAR (63 aa)).

It belongs to the class-I aminoacyl-tRNA synthetase family. TyrS type 2 subfamily. Homodimer.

The protein localises to the cytoplasm. The catalysed reaction is tRNA(Tyr) + L-tyrosine + ATP = L-tyrosyl-tRNA(Tyr) + AMP + diphosphate + H(+). In terms of biological role, catalyzes the attachment of tyrosine to tRNA(Tyr) in a two-step reaction: tyrosine is first activated by ATP to form Tyr-AMP and then transferred to the acceptor end of tRNA(Tyr). The protein is Tyrosine--tRNA ligase of Chlorobaculum tepidum (strain ATCC 49652 / DSM 12025 / NBRC 103806 / TLS) (Chlorobium tepidum).